Consider the following 137-residue polypeptide: Putative pre-16S rRNA nuclease (137 aa).

It belongs to the YqgF nuclease family.

The protein resides in the cytoplasm. In terms of biological role, could be a nuclease involved in processing of the 5'-end of pre-16S rRNA. The chain is Putative pre-16S rRNA nuclease from Clostridium botulinum (strain Alaska E43 / Type E3).